Consider the following 185-residue polypeptide: MKIAQELRTGNVVMIGNDAMVVQKAEYNKSGRNAAVVKMKFKNLLTGAGMETVYKADDKFDVVVLDRKEVTYSYFADPMYVFMDADYNQYEVEAEMMGDALNYLEDGMACEVVFYNEKAISVELPTTLVREIIYTEPAVKGDTSSGKVLKTAKLNTGFELQVPLFCNIGDKIEIDTRTNEYRSRA.

This sequence belongs to the elongation factor P family.

The protein localises to the cytoplasm. Its pathway is protein biosynthesis; polypeptide chain elongation. Its function is as follows. Involved in peptide bond synthesis. Stimulates efficient translation and peptide-bond synthesis on native or reconstituted 70S ribosomes in vitro. Probably functions indirectly by altering the affinity of the ribosome for aminoacyl-tRNA, thus increasing their reactivity as acceptors for peptidyl transferase. This is Elongation factor P from Paraburkholderia phymatum (strain DSM 17167 / CIP 108236 / LMG 21445 / STM815) (Burkholderia phymatum).